The chain runs to 575 residues: Transcription factor COE2 (575 aa).

Residues 62 to 65 (RKSN) form an interaction with DNA region. Residues 150–169 (CRVLLTHEVMCSRCCEKKSC) form a C5-type zinc finger. 2 interaction with DNA regions span residues 196 to 203 (NCLKTAGN) and 235 to 238 (NNSK). The 84-residue stretch at 253–336 (PCIKAISPSE…KGAPGRFIYT (84 aa)) folds into the IPT/TIG domain. Residues 441 to 453 (STQGNNQGYIRNT) show a composition bias toward polar residues. Positions 441-479 (STQGNNQGYIRNTSSISPRGYSSSSTPQQSNYSTSSNSM) are disordered. Residues 454-479 (SSISPRGYSSSSTPQQSNYSTSSNSM) show a composition bias toward low complexity.

The protein belongs to the COE family. As to quaternary structure, forms either a homodimer or a heterodimer with a related family member. Interacts with SIX1. As to expression, in adult expressed in olfactory epithelium and at a much lower level in Purkinje cells of the cerebellum. In embryo expressed in epithalamus, in cells near the ventricular zone of mesencephalon and on the ventral surface of rhombencephalon, in the developing vomeronasal organ, at a lower level in developing spinal cord. Not expressed in developing retina, inner ear, dorsal root ganglia, trigeminal ganglia and glossopharyngeal ganglia.

It localises to the nucleus. Functionally, transcription factor that, in osteoblasts, activates the decoy receptor for RANKL, TNFRSF11B, which in turn regulates osteoclast differentiation. Acts in synergy with the Wnt-responsive LEF1/CTNNB1 pathway. Recognizes variations of the palindromic sequence 5'-ATTCCCNNGGGAATT-3'. This Mus musculus (Mouse) protein is Transcription factor COE2 (Ebf2).